We begin with the raw amino-acid sequence, 555 residues long: Solute carrier family 22 member 2 (555 aa).

Residues 1–21 (MSTVDDILEHIGEFHLFQKQT) are Cytoplasmic-facing. The chain crosses the membrane as a helical span at residues 22–42 (FFLLALLSGAFTPIYVGIVFL). Topologically, residues 43–150 (GFTPDHHCWS…LVCAHSWMLD (108 aa)) are extracellular. Asn71 carries an N-linked (GlcNAc...) asparagine glycan. The helical transmembrane segment at 151-171 (LFQSVVNVGFFIGAMMIGYLA) threads the bilayer. The Cytoplasmic portion of the chain corresponds to 172 to 177 (DRFGRK). The chain crosses the membrane as a helical span at residues 178–198 (FCLLVTILINAISGALMAISP). Over 199–210 (NYAWMLVFRFLQ) the chain is Extracellular. The chain crosses the membrane as a helical span at residues 211–231 (GLVSKAGWLIGYILITEFVGL). Topologically, residues 232-238 (GYRRMVG) are cytoplasmic. A helical transmembrane segment spans residues 239-259 (ICYQIAFTVGLLILAGVAYVI). Residues 260-263 (PNWR) are Extracellular-facing. A helical transmembrane segment spans residues 264-284 (WLQFAVTLPNFCFLLYFWCIP). A Proline-rich sequence motif is present at residues 284–288 (PESPR). Topologically, residues 285–348 (ESPRWLISQN…VRTPQIRKHT (64 aa)) are cytoplasmic. The helical transmembrane segment at 349–369 (LILMYNWFTSSVLYQGLIMHM) threads the bilayer. Residues 370-375 (GLAGDN) lie on the Extracellular side of the membrane. A helical membrane pass occupies residues 376-396 (IYLDFFYSALVEFPAAFIIIL). The Cytoplasmic portion of the chain corresponds to 397–404 (TIDRVGRR). A helical membrane pass occupies residues 405-425 (YPWAVSNMVAGAACLASVFIP). At 426 to 432 (DDLQWLK) the chain is on the extracellular side. A helical transmembrane segment spans residues 433–453 (ITIACLGRMGITMAYEMVCLV). Residues 454–464 (NAELYPTYIRN) are Cytoplasmic-facing. The helical transmembrane segment at 465–485 (LGVLVCSSMCDIGGIITPFLV) threads the bilayer. At 486–494 (YRLTDIWME) the chain is on the extracellular side. Residues 495–515 (FPLVVFAVVGLVAGALVLLLP) form a helical membrane-spanning segment. Residues 516–555 (ETKGKALPETIEDAENMQRPRKKKEKRIYLQVKQADRPLS) are Cytoplasmic-facing.

This sequence belongs to the major facilitator (TC 2.A.1) superfamily. Organic cation transporter (TC 2.A.1.19) family. In terms of processing, tyrosine phosphorylated. Expressed in the kidney, in the proximal tubules of cortex and of the outer medulla. In brain, highly expressed predominantly in regions located at the brain-cerebrospinal fluid border, in the leptomeninges, in the choroid plexus and in a layer boarding the third ventricle. In brain, also observed in the granular cell layer of the cerebellum and in the granular layer and pyramidal cells of the hippocampus in the CA1-CA3 regions. Expressed in tracheal and bronchial ciliated epithelium in the respiratory tract. Expression is greater in the kidney of male than of female.

Its subcellular location is the basolateral cell membrane. The protein resides in the basal cell membrane. The protein localises to the apical cell membrane. The enzyme catalyses (R)-noradrenaline(out) = (R)-noradrenaline(in). The catalysed reaction is (R)-adrenaline(out) = (R)-adrenaline(in). It carries out the reaction serotonin(out) = serotonin(in). It catalyses the reaction dopamine(out) = dopamine(in). The enzyme catalyses histamine(out) = histamine(in). The catalysed reaction is thiamine(in) = thiamine(out). It carries out the reaction creatinine(in) = creatinine(out). It catalyses the reaction 1-methylnicotinamide(out) = 1-methylnicotinamide(in). The enzyme catalyses guanidine(out) = guanidine(in). The catalysed reaction is choline(out) = choline(in). It carries out the reaction agmatine(out) = agmatine(in). It catalyses the reaction putrescine(out) = putrescine(in). The enzyme catalyses spermidine(in) = spermidine(out). The catalysed reaction is tyramine(in) = tyramine(out). It carries out the reaction L-histidyl-L-proline diketopiperazine(in) = L-histidyl-L-proline diketopiperazine(out). It catalyses the reaction (R)-salsolinol(in) = (R)-salsolinol(out). The enzyme catalyses N-methyl-(R)-salsolinol(in) = N-methyl-(R)-salsolinol(out). The catalysed reaction is acetylcholine(in) = acetylcholine(out). It carries out the reaction prostaglandin F2alpha(out) = prostaglandin F2alpha(in). It catalyses the reaction prostaglandin E2(out) = prostaglandin E2(in). Its activity is regulated as follows. Tyrosine phosphorylation of the transporter leads to activation of the transport activity. Inhibited by cGMP, most likely through a cGMP-binding protein that interacts with OCT2. Its function is as follows. Electrogenic voltage-dependent transporter that mediates the transport of a variety of organic cations such as endogenous bioactive amines, cationic drugs and xenobiotics. Functions as a Na(+)-independent, bidirectional uniporter. Cation cellular uptake or release is driven by the electrochemical potential, i.e. membrane potential and concentration gradient. However, may also engage electroneutral cation exchange when saturating concentrations of cation substrates are reached. Predominantly expressed at the basolateral membrane of hepatocytes and proximal tubules and involved in the uptake and disposition of cationic compounds by hepatic and renal clearance from the blood flow. Implicated in monoamine neurotransmitters uptake such as histamine, dopamine, adrenaline/epinephrine, noradrenaline/norepinephrine, serotonin and tyramine, thereby supporting a physiological role in the central nervous system by regulating interstitial concentrations of neurotransmitters. Also capable of transporting dopaminergic neuromodulators cyclo(his-pro), salsolinol and N-methyl-salsolinol, thereby involved in the maintenance of dopaminergic cell integrity in the central nervous system. Mediates the bidirectional transport of acetylcholine (ACh) at the apical membrane of ciliated cell in airway epithelium, thereby playing a role in luminal release of ACh from bronchial epithelium. Also transports guanidine and endogenous monoamines such as vitamin B1/thiamine, creatinine and N-1-methylnicotinamide (NMN). Mediates the uptake and efflux of quaternary ammonium compound choline. Mediates the bidirectional transport of polyamine agmatine and the uptake of polyamine putrescine. Able to transport non-amine endogenous compounds such as prostaglandin E2 (PGE2) and prostaglandin F2-alpha (PGF2-alpha). Also involved in the uptake of xenobiotic 4-(4-(dimethylamino)styryl)-N-methylpyridinium (ASP). May contribute to regulate the transport of organic compounds in testis across the blood-testis-barrier. In Rattus norvegicus (Rat), this protein is Solute carrier family 22 member 2.